Consider the following 664-residue polypeptide: MSELLLELFSEEIPAFMQKNAEEGYLNIFTKIFEENEIFAKVQVFVGPRRITLHATHLPKITLPKEEEIKGPSIEAPEAAINGFCKAHNVSKLELPTKLISNQLYYFFVKKTEEREIKEILPEIIIEAINKYSWAKSMFWGDYKIKWIRPLRNILCIFDGEILPMQFGHLTANNITYGHRLTDNKKLEVTDFEDYRNKLLENHVILERAKREAIIKTGLLELASSHELIIKEDNRLVEEVVGLSEFPVVLLGKIPQKFLELPKEVLISSMRTHQKYFCLFDKTGNFTPYFLFVSNGRFTNAELVIQGNEKVLSARLSDALYFCKQDIAKTLESRLGQLEAVTFHAKLGNLREKIERITDICNYIAPNNKDLITAARLCKSDLVSEMVGEFPDLQGIMGYYYAKHEGLNAEIAAAIRDHYKPQGLSDNLPSGNAALLALADKLDSLVGLMIAGETPTGSGDPYALRRQALGIIRIILENKLELNFNDLINFSINLYKDSSDENKNLIISFFEERAKFYFKNDYDIALINAVLDLNLVDTNFKLDALKEFLIEDAGKQLLNAYKRASNIIGDQKITGLVDASLFSTQPEKELFEVIQKISPQIIDSIADKDYKKALNLLSSLLTPITSFFDNVLVNDSDPKIAQNRLSLLQNICELFDKVAKFNRL.

The protein belongs to the class-II aminoacyl-tRNA synthetase family. In terms of assembly, tetramer of two alpha and two beta subunits.

It localises to the cytoplasm. It catalyses the reaction tRNA(Gly) + glycine + ATP = glycyl-tRNA(Gly) + AMP + diphosphate. In Rickettsia conorii (strain ATCC VR-613 / Malish 7), this protein is Glycine--tRNA ligase beta subunit.